A 44-amino-acid chain; its full sequence is Photosystem I reaction center subunit IX (44 aa).

The chain crosses the membrane as a helical span at residues 9-29 (FMRSAPIVAAIWISLTAGIII).

Belongs to the PsaJ family.

The protein localises to the cellular thylakoid membrane. In terms of biological role, may help in the organization of the PsaE and PsaF subunits. This is Photosystem I reaction center subunit IX from Prochlorococcus marinus (strain MIT 9515).